A 104-amino-acid polypeptide reads, in one-letter code: ATP-dependent Clp protease adapter protein ClpS (104 aa).

This sequence belongs to the ClpS family. In terms of assembly, binds to the N-terminal domain of the chaperone ClpA.

Involved in the modulation of the specificity of the ClpAP-mediated ATP-dependent protein degradation. The sequence is that of ATP-dependent Clp protease adapter protein ClpS from Paraburkholderia xenovorans (strain LB400).